We begin with the raw amino-acid sequence, 192 residues long: Small ribosomal subunit protein uS5 (192 aa).

One can recognise an S5 DRBM domain in the interval 20–83 (FVDKLVHINR…EAAKRGLIRV (64 aa)). Residues 162–192 (SVAARRGLKVSALQARRRDADPADTSDAAVA) are disordered.

This sequence belongs to the universal ribosomal protein uS5 family. As to quaternary structure, part of the 30S ribosomal subunit. Contacts proteins S4 and S8.

Its function is as follows. With S4 and S12 plays an important role in translational accuracy. In terms of biological role, located at the back of the 30S subunit body where it stabilizes the conformation of the head with respect to the body. This Methylorubrum populi (strain ATCC BAA-705 / NCIMB 13946 / BJ001) (Methylobacterium populi) protein is Small ribosomal subunit protein uS5.